The following is a 373-amino-acid chain: MNTIGKSFRITAWGESHGKALGAVVDGCPSNLPLTGEDIQKELNRRRPGYSLFSTPRKEGDKVEILSGIFEGKTTGTPISAIVYNTNQKSKDYSHLKNTPRPGHADLSYKLKYGNYDYRGGGRSSGRTTIGHTIGGAIAKKLLDYTHNIKIIGYTTKIGNIEGDFNYYNSIENNEKMINEELINKIENNPLRCPSSNADEMKDFVLNAMENKNSVGGVIELIALNVPVGVGNPIFGKLNGELSNAIMNINAVKGVEIGRGFESAELLGSEMNDEYYYDENNNIKLKTNNCGGVLGGISCGAPLVIRVAVKPTPSISAVQSTINIENKTTENLEIGGRHDPIIVPRVIPVLESMVAIALSDLMIRGGFIHPCKL.

Residue Arg-46 coordinates NADP(+). FMN is bound by residues 123-125 (RSS), 250-251 (NA), Gly-295, 310-314 (KPTPS), and Arg-337.

The protein belongs to the chorismate synthase family. The cofactor is FMNH2.

The enzyme catalyses 5-O-(1-carboxyvinyl)-3-phosphoshikimate = chorismate + phosphate. It participates in metabolic intermediate biosynthesis; chorismate biosynthesis; chorismate from D-erythrose 4-phosphate and phosphoenolpyruvate: step 7/7. In terms of biological role, catalyzes the anti-1,4-elimination of the C-3 phosphate and the C-6 proR hydrogen from 5-enolpyruvylshikimate-3-phosphate (EPSP) to yield chorismate, which is the branch point compound that serves as the starting substrate for the three terminal pathways of aromatic amino acid biosynthesis. This reaction introduces a second double bond into the aromatic ring system. The chain is Chorismate synthase from Methanococcus aeolicus (strain ATCC BAA-1280 / DSM 17508 / OCM 812 / Nankai-3).